We begin with the raw amino-acid sequence, 543 residues long: Transmembrane protease serine 13 (543 aa).

2 disordered regions span residues 1-96 and 109-129; these read MDRG…TRVY and RASP…PGLS. Topologically, residues 1 to 143 are cytoplasmic; it reads MDRGSHRNSS…SWQETQRQLP (143 aa). Tandem repeats lie at residues 14–17 and 18–22. Positions 14–49 are 4 X 4 AA repeats of T-P-P-Q; the sequence is TPPQASPARTSPARAPPQASPARTPPQASPARTPPQ. The 8 X 5 AA repeats of A-S-P-A-R stretch occupies residues 18–69; that stretch reads ASPARTSPARAPPQASPARTPPQASPARTPPQASPARAPPPQASPARASPAR. The 2-2; approximate repeat unit spans residues 23-27; sequence TSPAR. The span at 27–60 shows a compositional bias: pro residues; the sequence is RAPPQASPARTPPQASPARTPPQASPARAPPPQA. One copy of the 1-2; approximate repeat lies at 28 to 31; the sequence is APPQ. Repeat copies occupy residues 32–36, 37–40, 41–45, 46–49, and 50–54. One copy of the 2-6; approximate repeat lies at 55-59; it reads APPPQ. 2 repeat units span residues 60 to 64 and 65 to 69. 2 stretches are compositionally biased toward low complexity: residues 61–94 and 109–120; these read SPAR…SPTR and RASPARSAPATR. The helical; Signal-anchor for type II membrane protein transmembrane segment at 144 to 164 threads the bilayer; it reads LIGCVILLISLVISLILLFYF. Topologically, residues 165 to 543 are extracellular; that stretch reads WRGHTGIKYK…MESEVRFRKS (379 aa). The LDL-receptor class A domain occupies 180 to 202; sequence CPIHAVRCDGVVDCKMKSDELGC. An SRCR domain is found at 199 to 301; it reads ELGCVRFDWD…HCGLRAMTGR (103 aa). 3 cysteine pairs are disulfide-bonded: cysteine 226/cysteine 290, cysteine 239/cysteine 293, and cysteine 327/cysteine 343. Residues asparagine 231 and asparagine 268 are each glycosylated (N-linked (GlcNAc...) asparagine). Positions 302–535 constitute a Peptidase S1 domain; sequence IVGGALTSES…VLPWIYRKME (234 aa). Histidine 342 serves as the catalytic Charge relay system. An N-linked (GlcNAc...) asparagine glycan is attached at asparagine 381. The Charge relay system role is filled by aspartate 390. Residue asparagine 421 is glycosylated (N-linked (GlcNAc...) asparagine). Disulfide bonds link cysteine 424-cysteine 493, cysteine 456-cysteine 472, and cysteine 483-cysteine 511. Serine 487 (charge relay system) is an active-site residue.

Belongs to the peptidase S1 family. Interacts with SPINT1/HAI-1; the interaction promotes the phosphorylation and cell membrane localization of TMPRSS13. Interacts with SPINT2/HAI-2; the interaction promotes the phosphorylation and cell membrane localization of TMPRSS13. Post-translationally, the inactive zymogen is post-translationally modified and then trafficked to the cell surface, whereby it undergoes autocatalytic cleavage resulting in an activated form that is released extracellularly. In terms of processing, phosphorylation is required for localization at the cell surface. Phosphorylation increases following inhibition of protease activity by SPINT2/HAI-2. In terms of tissue distribution, expressed in the suprabasal squamous epithelium of the epidermis, hair follicles, oral epithelium, cornea, upper digestive tract, transitional epithelium of the bladder, prostate, heart, intestine, kidney and thymus.

The protein localises to the cell membrane. It is found in the secreted. Its subcellular location is the cytoplasm. Its activity is regulated as follows. Cleavage of HGF is inhibited by SPINT1/HAI-1 via the BPTI/Kunitz inhibitor 1 domain. Its function is as follows. Serine protease. Cleaves the proform of PRSS8/prostasin to form the active protein. Cleaves the proform of HGF to form the active protein which promotes MAPK signaling. Promotes the formation of the stratum corneum and subsequently the epidermal barrier in embryos. The sequence is that of Transmembrane protease serine 13 (Tmprss13) from Mus musculus (Mouse).